A 254-amino-acid polypeptide reads, in one-letter code: 3-dehydroquinate dehydratase (254 aa).

Residues 47–49 (EFR) and arginine 83 contribute to the 3-dehydroquinate site. Histidine 144 acts as the Proton donor/acceptor in catalysis. The active-site Schiff-base intermediate with substrate is the lysine 171. Positions 213, 232, and 236 each coordinate 3-dehydroquinate.

Belongs to the type-I 3-dehydroquinase family. As to quaternary structure, homodimer.

The enzyme catalyses 3-dehydroquinate = 3-dehydroshikimate + H2O. It functions in the pathway metabolic intermediate biosynthesis; chorismate biosynthesis; chorismate from D-erythrose 4-phosphate and phosphoenolpyruvate: step 3/7. In terms of biological role, involved in the third step of the chorismate pathway, which leads to the biosynthesis of aromatic amino acids. Catalyzes the cis-dehydration of 3-dehydroquinate (DHQ) and introduces the first double bond of the aromatic ring to yield 3-dehydroshikimate. The sequence is that of 3-dehydroquinate dehydratase from Neisseria gonorrhoeae (strain ATCC 700825 / FA 1090).